Reading from the N-terminus, the 458-residue chain is Opine oxidase subunit A (458 aa).

To T-protein and to dimethylglycine dehydrogenase. As to quaternary structure, heterodimer of a subunit A and a subunit B.

It functions in the pathway opine metabolism; octopine degradation. In terms of biological role, oxidative cleavage of octopine into L-arginine and pyruvate. The chain is Opine oxidase subunit A (ooxA) from Rhizobium meliloti (strain 1021) (Ensifer meliloti).